The sequence spans 292 residues: Tetratricopeptide repeat protein 1 (292 aa).

The interval 23–125 (TQEAECAGPP…STRLKEEGNE (103 aa)) is disordered. Basic and acidic residues-rich tracts occupy residues 45–55 (LLRDDEAHLQE) and 75–85 (GADKVENKSNE). Phosphoserine occurs at positions 83 and 90. Basic and acidic residues predominate over residues 99–125 (ELEKNMSDEEKQKRREESTRLKEEGNE). TPR repeat units lie at residues 116 to 149 (STRLKEEGNEQFKKGDYIEAESSYSRALEMCPSC), 155 to 188 (SILFSNRAAARMKQDKKEMAINDCSKAIQLNPSY), and 189 to 222 (IRAILRRAELYEKTDKLDEALEDYKSILEKDPSI).

Interacts with the GAP domain of NF1. Interacts (via TPR repeats) with HSP90AA1 and HSPA8.

The sequence is that of Tetratricopeptide repeat protein 1 (TTC1) from Homo sapiens (Human).